Here is a 102-residue protein sequence, read N- to C-terminus: Small ribosomal subunit protein uS10 (102 aa).

This sequence belongs to the universal ribosomal protein uS10 family. As to quaternary structure, part of the 30S ribosomal subunit.

Involved in the binding of tRNA to the ribosomes. The polypeptide is Small ribosomal subunit protein uS10 (Listeria innocua serovar 6a (strain ATCC BAA-680 / CLIP 11262)).